A 1081-amino-acid polypeptide reads, in one-letter code: Protein QUIRKY (1081 aa).

The C2 1 domain maps to Met-1–Tyr-124. Disordered stretches follow at residues Asp-154 to Pro-198 and Pro-238 to Lys-323. Low complexity predominate over residues Gln-163 to Gln-176. The segment covering Asn-248 to Pro-257 has biased composition (basic and acidic residues). The segment covering Gln-258–Ser-268 has biased composition (pro residues). 3 C2 domains span residues Thr-318–Tyr-440, Ser-477–His-605, and Val-652–Tyr-778. Ca(2+) is bound by residues Glu-351, Ser-352, Asp-408, and Ser-413. A run of 3 helical transmembrane segments spans residues Trp-879–Ile-899, Leu-916–Ile-936, and Leu-1024–Val-1044.

It belongs to the MCTP family. Interacts with SUB/SCM and POQ at the plasma membrane. Binds to SUB/SCM at plasmodesmata (PD) in root epidermal cells to promote tissue morphogenesis. It depends on Ca(2+) as a cofactor. As to expression, observed mainly in flowers, and, to a lower extent, in seedlings, roots, shoots, leaves, stems and inflorescences. Expressed in the vascular tissues of roots, cotyledons and rosette leaves. Accumulates in roots meristems.

The protein resides in the cell membrane. Its subcellular location is the cytoplasm. The protein localises to the golgi apparatus membrane. It is found in the cell junction. It localises to the plasmodesma. Functionally, may be involved in Ca 2(+)-dependent signaling and membrane trafficking. Plays a role in fruit dehiscence. Components of the machinery involved in organ development mediated by the receptor-like kinase STRUBBELIG (SUB). Collaboratively with SUB and POQ, regulates cell growth anisotropy during gynoecium development, thus linking together cell-cell communication and cellular growth. Together with SUB/SCM, links RLK-dependent signal transduction and intercellular communication mediated by plasmodesmata (PD) to regulate tissue morphogenesis. May function as a signaling molecule by regulating the trafficking of other regulators. The protein is Protein QUIRKY of Arabidopsis thaliana (Mouse-ear cress).